A 65-amino-acid chain; its full sequence is Large ribosomal subunit protein bL35 (65 aa).

Residues 30-65 (AFRSHLAQNKSTKQKRQSKHGTFMHPTDYKRLKDLM) are disordered. Over residues 56-65 (TDYKRLKDLM) the composition is skewed to basic and acidic residues.

The protein belongs to the bacterial ribosomal protein bL35 family.

This chain is Large ribosomal subunit protein bL35, found in Mycoplasma mobile (strain ATCC 43663 / 163K / NCTC 11711) (Mesomycoplasma mobile).